The chain runs to 423 residues: Glutamyl-tRNA reductase (423 aa).

Substrate is bound by residues 49-52, S106, 111-113, and Q117; these read TCNR and EPQ. The active-site Nucleophile is C50. 186–191 is an NADP(+) binding site; sequence GAGDTS.

Belongs to the glutamyl-tRNA reductase family. As to quaternary structure, homodimer.

The enzyme catalyses (S)-4-amino-5-oxopentanoate + tRNA(Glu) + NADP(+) = L-glutamyl-tRNA(Glu) + NADPH + H(+). The protein operates within porphyrin-containing compound metabolism; protoporphyrin-IX biosynthesis; 5-aminolevulinate from L-glutamyl-tRNA(Glu): step 1/2. In terms of biological role, catalyzes the NADPH-dependent reduction of glutamyl-tRNA(Glu) to glutamate 1-semialdehyde (GSA). This chain is Glutamyl-tRNA reductase, found in Idiomarina loihiensis (strain ATCC BAA-735 / DSM 15497 / L2-TR).